The sequence spans 62 residues: DNA-directed RNA polymerase subunit Rpo10 (62 aa).

Zn(2+) contacts are provided by cysteine 6, cysteine 9, cysteine 43, and cysteine 44.

It belongs to the archaeal Rpo10/eukaryotic RPB10 RNA polymerase subunit family. As to quaternary structure, part of the RNA polymerase complex. Requires Zn(2+) as cofactor.

Its subcellular location is the cytoplasm. The enzyme catalyses RNA(n) + a ribonucleoside 5'-triphosphate = RNA(n+1) + diphosphate. Its function is as follows. DNA-dependent RNA polymerase (RNAP) catalyzes the transcription of DNA into RNA using the four ribonucleoside triphosphates as substrates. This chain is DNA-directed RNA polymerase subunit Rpo10, found in Methanocorpusculum labreanum (strain ATCC 43576 / DSM 4855 / Z).